A 92-amino-acid chain; its full sequence is Non-specific lipid-transfer protein A (92 aa).

Intrachain disulfides connect cysteine 3/cysteine 51, cysteine 13/cysteine 28, cysteine 29/cysteine 74, and cysteine 49/cysteine 88.

The protein belongs to the plant LTP family.

In terms of biological role, plant non-specific lipid-transfer proteins transfer phospholipids as well as galactolipids across membranes. May play a role in wax or cutin deposition in the cell walls of expanding epidermal cells and certain secretory tissues. In Ricinus communis (Castor bean), this protein is Non-specific lipid-transfer protein A.